A 99-amino-acid polypeptide reads, in one-letter code: Putative membrane protein insertion efficiency factor (99 aa).

Belongs to the UPF0161 family.

The protein localises to the cell membrane. Could be involved in insertion of integral membrane proteins into the membrane. The chain is Putative membrane protein insertion efficiency factor from Levilactobacillus brevis (strain ATCC 367 / BCRC 12310 / CIP 105137 / JCM 1170 / LMG 11437 / NCIMB 947 / NCTC 947) (Lactobacillus brevis).